The sequence spans 317 residues: MSFANADTPPQVVVLGAGAWGSSLAYVLNNNDIPTQVWSRRSPQSLESMVAGADVIVSAVSIKGVPSVAARLEAMDLQRRTILVTATKGLDPETMTTPSQIWQAALPSQPIAVLSGPNLSKEIDQGLPAATVVASSDQAAAEEIQTIFAADNFRVYTNNDPLGTELGGTLKNVMAIAVGVCEGLGLGTNAKSALITRALPEITRVGLHFGAQPDTFWGLAGLGDLLATCSSMLSRNYRVGYGLSKGQSLEEILANLGGTAEGVNTTDVLIKIANREKIAVPITRQVYRLLHGKITPPQAVEALMERELKAEFEDFDL.

NADPH contacts are provided by tryptophan 20, arginine 40, arginine 41, and lysine 88. 2 residues coordinate sn-glycerol 3-phosphate: lysine 88 and glycine 116. Serine 120 is an NADPH binding site. 5 residues coordinate sn-glycerol 3-phosphate: lysine 171, aspartate 224, serine 234, arginine 235, and asparagine 236. Lysine 171 functions as the Proton acceptor in the catalytic mechanism. Residue arginine 235 coordinates NADPH. An NADPH-binding site is contributed by glutamate 261.

The protein belongs to the NAD-dependent glycerol-3-phosphate dehydrogenase family.

It is found in the cytoplasm. The enzyme catalyses sn-glycerol 3-phosphate + NAD(+) = dihydroxyacetone phosphate + NADH + H(+). It catalyses the reaction sn-glycerol 3-phosphate + NADP(+) = dihydroxyacetone phosphate + NADPH + H(+). It functions in the pathway membrane lipid metabolism; glycerophospholipid metabolism. Catalyzes the reduction of the glycolytic intermediate dihydroxyacetone phosphate (DHAP) to sn-glycerol 3-phosphate (G3P), the key precursor for phospholipid synthesis. The chain is Glycerol-3-phosphate dehydrogenase [NAD(P)+] from Synechocystis sp. (strain ATCC 27184 / PCC 6803 / Kazusa).